The primary structure comprises 273 residues: Tyrosinase (273 aa).

The first 18 residues, 1 to 18, serve as a signal peptide directing secretion; it reads MLLFTMGLLLAILQPSTG. Residues Asn86, Asn111, and Asn161 are each glycosylated (N-linked (GlcNAc...) asparagine). Cu cation contacts are provided by His180, His202, and His211. A glycan (N-linked (GlcNAc...) asparagine) is linked at Asn230.

It belongs to the tyrosinase family. Requires Cu(2+) as cofactor.

The protein resides in the melanosome membrane. The protein localises to the melanosome. The catalysed reaction is 2 L-dopa + O2 = 2 L-dopaquinone + 2 H2O. It catalyses the reaction L-tyrosine + O2 = L-dopaquinone + H2O. Functionally, this is a copper-containing oxidase that functions in the formation of pigments such as melanins and other polyphenolic compounds. Catalyzes the initial and rate limiting step in the cascade of reactions leading to melanin production from tyrosine. In addition to hydroxylating tyrosine to DOPA (3,4-dihydroxyphenylalanine), also catalyzes the oxidation of DOPA to DOPA-quinone, and possibly the oxidation of DHI (5,6-dihydroxyindole) to indole-5,6 quinone. In Coturnix japonica (Japanese quail), this protein is Tyrosinase (TYR).